A 242-amino-acid chain; its full sequence is DNA repair protein RecO (242 aa).

It belongs to the RecO family. Monomer.

Involved in DNA repair and RecF pathway recombination. The polypeptide is DNA repair protein RecO (Shigella boydii serotype 18 (strain CDC 3083-94 / BS512)).